Consider the following 338-residue polypeptide: Anthranilate phosphoribosyltransferase (338 aa).

5-phospho-alpha-D-ribose 1-diphosphate contacts are provided by residues glycine 78, 81–82 (GD), threonine 86, 88–91 (NIST), 106–114 (KHGNRSVSS), and serine 118. Glycine 78 provides a ligand contact to anthranilate. Serine 90 serves as a coordination point for Mg(2+). Asparagine 109 lines the anthranilate pocket. Arginine 164 is a binding site for anthranilate. Residues aspartate 223 and glutamate 224 each contribute to the Mg(2+) site.

It belongs to the anthranilate phosphoribosyltransferase family. In terms of assembly, homodimer. Requires Mg(2+) as cofactor.

The enzyme catalyses N-(5-phospho-beta-D-ribosyl)anthranilate + diphosphate = 5-phospho-alpha-D-ribose 1-diphosphate + anthranilate. Its pathway is amino-acid biosynthesis; L-tryptophan biosynthesis; L-tryptophan from chorismate: step 2/5. In terms of biological role, catalyzes the transfer of the phosphoribosyl group of 5-phosphorylribose-1-pyrophosphate (PRPP) to anthranilate to yield N-(5'-phosphoribosyl)-anthranilate (PRA). This chain is Anthranilate phosphoribosyltransferase, found in Bacillus velezensis (strain DSM 23117 / BGSC 10A6 / LMG 26770 / FZB42) (Bacillus amyloliquefaciens subsp. plantarum).